Reading from the N-terminus, the 412-residue chain is Serine hydroxymethyltransferase (412 aa).

Residues Leu112 and 116-118 contribute to the (6S)-5,6,7,8-tetrahydrofolate site; that span reads GHL. N6-(pyridoxal phosphate)lysine is present on Lys221. Residue Glu237 coordinates (6S)-5,6,7,8-tetrahydrofolate.

The protein belongs to the SHMT family. As to quaternary structure, homodimer. Pyridoxal 5'-phosphate serves as cofactor.

The protein localises to the cytoplasm. The enzyme catalyses (6R)-5,10-methylene-5,6,7,8-tetrahydrofolate + glycine + H2O = (6S)-5,6,7,8-tetrahydrofolate + L-serine. It functions in the pathway one-carbon metabolism; tetrahydrofolate interconversion. Its pathway is amino-acid biosynthesis; glycine biosynthesis; glycine from L-serine: step 1/1. Its function is as follows. Catalyzes the reversible interconversion of serine and glycine with tetrahydrofolate (THF) serving as the one-carbon carrier. This reaction serves as the major source of one-carbon groups required for the biosynthesis of purines, thymidylate, methionine, and other important biomolecules. Also exhibits THF-independent aldolase activity toward beta-hydroxyamino acids, producing glycine and aldehydes, via a retro-aldol mechanism. In Malacoplasma penetrans (strain HF-2) (Mycoplasma penetrans), this protein is Serine hydroxymethyltransferase.